The chain runs to 236 residues: MAATFPGVCAVVPAAGFGRRMQTECPKQYLSIGNKTILEHAVAALLADARVQRVVIAVSPGDRRFSQLPLAQHPQITVVDGGAERADSVLAGLQALPEAQWVLVHDAARPCLHQDDLSRLLSLCETSRVGGILAAPVRDTMKRAEPGKTAIAHTVDRNDLWHALTPQFFPRELLVDCLTRALNEGATITDEASALEYCGFHPQLVAGRADNIKVTRPEDLALAEFYLTRSRHQEKA.

The protein belongs to the IspD/TarI cytidylyltransferase family. IspD subfamily. In terms of assembly, homodimer.

It carries out the reaction 2-C-methyl-D-erythritol 4-phosphate + CTP + H(+) = 4-CDP-2-C-methyl-D-erythritol + diphosphate. Its pathway is isoprenoid biosynthesis; isopentenyl diphosphate biosynthesis via DXP pathway; isopentenyl diphosphate from 1-deoxy-D-xylulose 5-phosphate: step 2/6. Its function is as follows. Catalyzes the formation of 4-diphosphocytidyl-2-C-methyl-D-erythritol from CTP and 2-C-methyl-D-erythritol 4-phosphate (MEP). The chain is 2-C-methyl-D-erythritol 4-phosphate cytidylyltransferase from Klebsiella pneumoniae subsp. pneumoniae (strain ATCC 700721 / MGH 78578).